We begin with the raw amino-acid sequence, 176 residues long: Large ribosomal subunit protein uL6 (176 aa).

It belongs to the universal ribosomal protein uL6 family. In terms of assembly, part of the 50S ribosomal subunit.

In terms of biological role, this protein binds to the 23S rRNA, and is important in its secondary structure. It is located near the subunit interface in the base of the L7/L12 stalk, and near the tRNA binding site of the peptidyltransferase center. The polypeptide is Large ribosomal subunit protein uL6 (Paraburkholderia phymatum (strain DSM 17167 / CIP 108236 / LMG 21445 / STM815) (Burkholderia phymatum)).